The sequence spans 829 residues: Protein SEY1 homolog 2 (829 aa).

Residues methionine 1–proline 21 form a disordered region. At methionine 1 to glutamine 728 the chain is on the cytoplasmic side. One can recognise a GB1/RHD3-type G domain in the interval glycine 83–proline 305. GTP is bound at residue glycine 93–serine 100. Coiled coils occupy residues lysine 372 to serine 396 and aspartate 576 to leucine 596. The helical transmembrane segment at isoleucine 729–leucine 749 threads the bilayer. Residues threonine 750–proline 752 are Lumenal-facing. A helical membrane pass occupies residues leucine 753–leucine 773. Residues glycine 774–lysine 829 lie on the Cytoplasmic side of the membrane.

Belongs to the TRAFAC class dynamin-like GTPase superfamily. GB1/RHD3 GTPase family. RHD3 subfamily.

Its subcellular location is the endoplasmic reticulum membrane. Functionally, probable GTP-binding protein that may be involved in cell development. The chain is Protein SEY1 homolog 2 from Entamoeba dispar (strain ATCC PRA-260 / SAW760).